A 25-amino-acid chain; its full sequence is Cytochrome c oxidase subunit 1 (25 aa).

It belongs to the heme-copper respiratory oxidase family. Cu(2+) serves as cofactor. The cofactor is heme.

Its subcellular location is the cell inner membrane. The enzyme catalyses 4 Fe(II)-[cytochrome c] + O2 + 8 H(+)(in) = 4 Fe(III)-[cytochrome c] + 2 H2O + 4 H(+)(out). It participates in energy metabolism; oxidative phosphorylation. Its function is as follows. Subunit I and II form the functional core of the enzyme complex. Electrons originating in cytochrome c are transferred via heme a and Cu(A) to the binuclear center formed by heme a3 and Cu(B). This cytochrome c oxidase shows proton pump activity across the membrane in addition to the electron transfer. The protein is Cytochrome c oxidase subunit 1 (ctaD) of Paracoccus versutus (Thiobacillus versutus).